The primary structure comprises 545 residues: Baeyer-Villiger monooxygenase (545 aa).

FAD-binding residues include Phe24, Asp45, Trp54, Asp65, Tyr71, and Val118.

Belongs to the FAD-binding monooxygenase family. FAD is required as a cofactor.

Functionally, catalyzes a Baeyer-Villiger oxidation reaction, i.e. the insertion of an oxygen atom into a carbon-carbon bond adjacent to a carbonyl, which converts ketones to esters or lactones using NADPH as an electron donor. Besides cycloalkanones, can use cyclic alpha,beta-unsaturated ketones as substrates, leading to conjugated ene-lactones. Can also act on methylated cycloalkanones and methylated cycloalkenones with high enantioselectivity in some cases. This chain is Baeyer-Villiger monooxygenase, found in Pseudooceanicola batsensis (strain ATCC BAA-863 / DSM 15984 / KCTC 12145 / HTCC2597) (Oceanicola batsensis).